The sequence spans 66 residues: Large ribosomal subunit protein bL35 (66 aa).

The interval 20-40 (GKVKHAQRGKRHGMIKRTKKQ) is disordered.

This sequence belongs to the bacterial ribosomal protein bL35 family.

This Nitrobacter winogradskyi (strain ATCC 25391 / DSM 10237 / CIP 104748 / NCIMB 11846 / Nb-255) protein is Large ribosomal subunit protein bL35.